Here is a 155-residue protein sequence, read N- to C-terminus: Glutaredoxin-related protein 5, mitochondrial (155 aa).

A mitochondrion-targeting transit peptide spans M1–S14. A Glutaredoxin domain is found at Q42–S145. K59 serves as a coordination point for glutathione. [2Fe-2S] cluster is bound at residue C67. Glutathione-binding positions include R97–K101, I109, and C122–D123.

In terms of assembly, homodimer.

The protein resides in the mitochondrion. In terms of biological role, monothiol glutaredoxin involved in mitochondrial iron-sulfur (Fe/S) cluster transfer. Receives iron-sulfur clusters from scaffold protein ISCU and mediates their transfer to apoproteins, to the 4Fe/FS cluster biosynthesis machinery, or export from mitochondrion. Required for normal hemoglobin biosynthesis. The polypeptide is Glutaredoxin-related protein 5, mitochondrial (glrx5) (Danio rerio (Zebrafish)).